The chain runs to 448 residues: Homogentisate 1,2-dioxygenase (448 aa).

H303 (proton acceptor) is an active-site residue. The Fe cation site is built by H346 and E352. Y361 and H382 together coordinate homogentisate. H382 contacts Fe cation.

Belongs to the homogentisate dioxygenase family. As to quaternary structure, hexamer; dimer of trimers. Fe cation is required as a cofactor.

The catalysed reaction is homogentisate + O2 = 4-maleylacetoacetate + H(+). The protein operates within amino-acid degradation; L-phenylalanine degradation; acetoacetate and fumarate from L-phenylalanine: step 4/6. Functionally, involved in the catabolism of homogentisate (2,5-dihydroxyphenylacetate or 2,5-OH-PhAc), a central intermediate in the degradation of phenylalanine and tyrosine. Catalyzes the oxidative ring cleavage of the aromatic ring of homogentisate to yield maleylacetoacetate. In Rhodopseudomonas palustris (strain BisB5), this protein is Homogentisate 1,2-dioxygenase.